The sequence spans 253 residues: Dihydroanticapsin 7-dehydrogenase (253 aa).

9–31 is an NAD(+) binding site; the sequence is LITGGASGIGYAAVQAFLNQQAN. Ser139 is a substrate binding site. Tyr152 acts as the Proton acceptor in catalysis.

This sequence belongs to the short-chain dehydrogenases/reductases (SDR) family.

The catalysed reaction is L-dihydroanticapsin + NAD(+) = L-anticapsin + NADH + H(+). It participates in antibiotic biosynthesis; bacilysin biosynthesis. Functionally, part of the bacABCDEFG operon responsible for the biosynthesis of bacilysin, an irreversible inactivator of the glutaminase domain of glucosamine synthetase. Catalyzes the dehydrogenation of the C7-hydroxyl group in the 4S-tetrahydrotyrosine (4S-H4Tyr) to yield anticapsin (epoxycyclohexanonyl-Ala). The protein is Dihydroanticapsin 7-dehydrogenase of Bacillus subtilis.